We begin with the raw amino-acid sequence, 1167 residues long: Tight junction protein 2 (1167 aa).

Residues 10 to 97 (TVTLQKDSKR…IAAIVVKRPR (88 aa)) form the PDZ 1 domain. 10 positions are modified to phosphoserine: S107, S127, S130, S140, S145, S147, S173, S194, S205, and S239. A disordered region spans residues 129-195 (RSGYSERSRH…SRERSRGRSL (67 aa)). Residues 225-286 (SYHEAYEPDY…KGQHDPDRPI (62 aa)) are disordered. A compositionally biased stretch (basic and acidic residues) spans 242-262 (YDRRAHPETRYERSRSREHLR). The 79-residue stretch at 287–365 (GVLLTKSKAN…KLQLVVLRDS (79 aa)) folds into the PDZ 2 domain. S305, S378, S380, S386, S395, S404, S410, and S411 each carry phosphoserine. Residues 381 to 485 (EVEDISEIES…LRPSPEDEAI (105 aa)) form a disordered region. A compositionally biased stretch (basic and acidic residues) spans 395–426 (SPEERRQQYSDQDYHSSTEKLKERPSSREETS). A Phosphothreonine modification is found at T435. Position 479 is a phosphoserine (S479). The PDZ 3 domain maps to 489-570 (NTKMVRFKKG…GETVTILAQS (82 aa)). Position 554 is a phosphotyrosine (Y554). The region spanning 584–649 (GDSFFIRSHF…PNKSRAEQMA (66 aa)) is the SH3 domain. Residues 660 to 858 (GDRADFWRMR…WFGSLKDSIQ (199 aa)) form the Guanylate kinase-like domain. Phosphoserine is present on residues S684 and S884. T887 is subject to Phosphothreonine. Phosphoserine occurs at positions 895 and 902. 2 disordered regions span residues 904-1055 (FEDT…PRSV) and 1095-1167 (YAVP…DTEL). A phosphothreonine mark is found at T907 and T915. Basic and acidic residues predominate over residues 938–949 (VQHEENIRKSSP). 5 positions are modified to phosphoserine: S948, S960, S968, S988, and S1044. The segment covering 976–990 (EPPKARSQNREDSFD) has biased composition (basic and acidic residues). The segment covering 1037–1049 (ESEEVGESTEEQE) has biased composition (acidic residues). Y1095 is modified (phosphotyrosine). Residues S1124 and S1136 each carry the phosphoserine modification. Residues 1165-1167 (TEL) are interaction with SCRIB.

This sequence belongs to the MAGUK family. In terms of assembly, homodimer. Interacts (via PDZ2 domain) with TJP1/ZO1 (via PDZ2 domain). Interacts with UBN1. Interacts with SCRIB. Interacts with OCLN. Interacts with SAFB in the nucleus. Interacts with USP53 (via the C-terminal region). Interacts with claudins, including CLDN1, CLDN2, CLDN3, CLDN5 and CLDN7. Interacts with CLDN18. Interacts (via N-terminus) with CTNNA1.

It localises to the cell junction. Its subcellular location is the adherens junction. The protein localises to the cell membrane. The protein resides in the nucleus. It is found in the tight junction. In terms of biological role, plays a role in tight junctions and adherens junctions. Acts as a positive regulator of RANKL-induced osteoclast differentiation, potentially via mediating downstream transcriptional activity. This chain is Tight junction protein 2, found in Mus musculus (Mouse).